Consider the following 177-residue polypeptide: NAD(P)H-quinone oxidoreductase subunit 6, chloroplastic (177 aa).

5 helical membrane passes run 10–30 (ILVV…VLFT), 33–53 (IYSA…YILL), 61–81 (AQLL…VMFM), 92–112 (LWTV…FLLI), and 152–172 (FFLP…GAIS).

Belongs to the complex I subunit 6 family. As to quaternary structure, NDH is composed of at least 16 different subunits, 5 of which are encoded in the nucleus.

Its subcellular location is the plastid. It localises to the chloroplast thylakoid membrane. It catalyses the reaction a plastoquinone + NADH + (n+1) H(+)(in) = a plastoquinol + NAD(+) + n H(+)(out). The enzyme catalyses a plastoquinone + NADPH + (n+1) H(+)(in) = a plastoquinol + NADP(+) + n H(+)(out). Functionally, NDH shuttles electrons from NAD(P)H:plastoquinone, via FMN and iron-sulfur (Fe-S) centers, to quinones in the photosynthetic chain and possibly in a chloroplast respiratory chain. The immediate electron acceptor for the enzyme in this species is believed to be plastoquinone. Couples the redox reaction to proton translocation, and thus conserves the redox energy in a proton gradient. This chain is NAD(P)H-quinone oxidoreductase subunit 6, chloroplastic (ndhG), found in Lemna minor (Common duckweed).